The following is a 243-amino-acid chain: Pyridoxine 5'-phosphate synthase (243 aa).

Asparagine 9 contributes to the 3-amino-2-oxopropyl phosphate binding site. Aspartate 11–histidine 12 lines the 1-deoxy-D-xylulose 5-phosphate pocket. A 3-amino-2-oxopropyl phosphate-binding site is contributed by arginine 20. Residue histidine 45 is the Proton acceptor of the active site. 1-deoxy-D-xylulose 5-phosphate-binding residues include arginine 47 and histidine 52. The active-site Proton acceptor is glutamate 72. Threonine 102 contacts 1-deoxy-D-xylulose 5-phosphate. The Proton donor role is filled by histidine 193. Residues glycine 194 and glycine 215 to histidine 216 contribute to the 3-amino-2-oxopropyl phosphate site.

Belongs to the PNP synthase family. Homooctamer; tetramer of dimers.

It localises to the cytoplasm. It catalyses the reaction 3-amino-2-oxopropyl phosphate + 1-deoxy-D-xylulose 5-phosphate = pyridoxine 5'-phosphate + phosphate + 2 H2O + H(+). It participates in cofactor biosynthesis; pyridoxine 5'-phosphate biosynthesis; pyridoxine 5'-phosphate from D-erythrose 4-phosphate: step 5/5. In terms of biological role, catalyzes the complicated ring closure reaction between the two acyclic compounds 1-deoxy-D-xylulose-5-phosphate (DXP) and 3-amino-2-oxopropyl phosphate (1-amino-acetone-3-phosphate or AAP) to form pyridoxine 5'-phosphate (PNP) and inorganic phosphate. This is Pyridoxine 5'-phosphate synthase from Escherichia coli O157:H7.